Consider the following 216-residue polypeptide: Thiopurine S-methyltransferase (216 aa).

Residues Trp-10, Leu-45, Glu-66, and Arg-123 each coordinate S-adenosyl-L-methionine.

This sequence belongs to the class I-like SAM-binding methyltransferase superfamily. TPMT family.

Its subcellular location is the cytoplasm. It carries out the reaction S-adenosyl-L-methionine + a thiopurine = S-adenosyl-L-homocysteine + a thiopurine S-methylether.. This chain is Thiopurine S-methyltransferase, found in Pseudomonas putida (strain ATCC 47054 / DSM 6125 / CFBP 8728 / NCIMB 11950 / KT2440).